The sequence spans 97 residues: Large ribosomal subunit protein uL23 (97 aa).

The protein belongs to the universal ribosomal protein uL23 family. As to quaternary structure, part of the 50S ribosomal subunit. Contacts protein L29, and trigger factor when it is bound to the ribosome.

In terms of biological role, one of the early assembly proteins it binds 23S rRNA. One of the proteins that surrounds the polypeptide exit tunnel on the outside of the ribosome. Forms the main docking site for trigger factor binding to the ribosome. This is Large ribosomal subunit protein uL23 from Brucella anthropi (strain ATCC 49188 / DSM 6882 / CCUG 24695 / JCM 21032 / LMG 3331 / NBRC 15819 / NCTC 12168 / Alc 37) (Ochrobactrum anthropi).